A 581-amino-acid polypeptide reads, in one-letter code: Frizzled-8 (581 aa).

A signal peptide spans 1–23 (MESLSLSLLLLVSWLQGSQCAAA). Residues 24-144 (KELSCQEITV…GNPDTLCMDY (121 aa)) enclose the FZ domain. Over 24–239 (KELSCQEITV…PEERTFTEFW (216 aa)) the chain is Extracellular. 5 cysteine pairs are disulfide-bonded: Cys28–Cys89, Cys36–Cys82, Cys73–Cys111, Cys100–Cys141, and Cys104–Cys128. Asn42 carries N-linked (GlcNAc...) asparagine glycosylation. Residue 64–71 (QFWPLVVI) participates in hexadecanoate binding. The wnt-binding stretch occupies residues 88–93 (ICLEDY). Residues 140–146 (LCMDYYN) form a wnt-binding region. The N-linked (GlcNAc...) asparagine glycan is linked to Asn146. Residues 151-189 (TTAAPSHPEPPKPPARSVPKGRTRVEPPRSRSRATGCES) are disordered. The span at 157 to 166 (HPEPPKPPAR) shows a compositional bias: pro residues. Residues 240–260 (IGLWSVLCFASTFATVSTFLI) traverse the membrane as a helical segment. Topologically, residues 261 to 271 (DMERFKYPERP) are cytoplasmic. A helical membrane pass occupies residues 272 to 292 (IIFLSACYLLVSTGYLIRLIA). The Extracellular segment spans residues 293 to 320 (GHEKVACSRGELDLEHIIHYETTGPALC). The helical transmembrane segment at 321 to 341 (TLVFLLIYFFGMASSIWWVIL) threads the bilayer. The Cytoplasmic portion of the chain corresponds to 342 to 377 (SLTWFLAAGMKWGNEAIAGYSQYFHLAAWLVPSIKS). Residues 378-398 (IAVLALSSVDGDPVAGICFVG) form a helical membrane-spanning segment. Over 399 to 407 (NQNLDNLRG) the chain is Extracellular. A helical membrane pass occupies residues 408-428 (FVLAPLVIYLFIGSMFLLAGF). The Cytoplasmic portion of the chain corresponds to 429 to 454 (VSLFRIRSVIKQGGTKTDKLEKLMIR). Residues 455-475 (IGIFSVLYTVPATIVVACFFY) form a helical membrane-spanning segment. At 476 to 505 (EQHNRQGWEVAHNCNSCQPEMAQPHRPDYA) the chain is on the extracellular side. A helical membrane pass occupies residues 506–526 (VFMLKYFMCLVVGITSGVWIW). The Cytoplasmic portion of the chain corresponds to 527–581 (SGKTLESWRAFCTRCCWGSKATGGSMYSDVSTGLTWRSGTGSSVSCPKQMPLSQV). The Lys-Thr-X-X-X-Trp motif, mediates interaction with the PDZ domain of Dvl family members signature appears at 529 to 534 (KTLESW). The short motif at 579–581 (SQV) is the PDZ-binding element.

Belongs to the G-protein coupled receptor Fz/Smo family. As to quaternary structure, interacts with lypd6 and the interaction is strongly enhanced by wnt3a.

The protein localises to the membrane. The protein resides in the cell membrane. Functionally, receptor for Wnt proteins. Most of frizzled receptors are coupled to the beta-catenin canonical signaling pathway, which leads to the activation of disheveled proteins, inhibition of GSK-3 kinase, nuclear accumulation of beta-catenin and activation of Wnt target genes. A second signaling pathway involving PKC and calcium fluxes has been seen for some family members, but it is not yet clear if it represents a distinct pathway or if it can be integrated in the canonical pathway, as PKC seems to be required for Wnt-mediated inactivation of GSK-3 kinase. Both pathways seem to involve interactions with G-proteins. May be involved in transduction and intercellular transmission of polarity information during tissue morphogenesis and/or in differentiated tissues. Activation by Wnt8, Wnt5A or Wnt3A induces expression of beta-catenin target genes. Displays an axis-inducing activity. The polypeptide is Frizzled-8 (fzd8) (Xenopus laevis (African clawed frog)).